The chain runs to 766 residues: Ent-copalyl diphosphate synthase 3 (766 aa).

A chloroplast-targeting transit peptide spans 1–30 (FRSTAAGRCLPVTCCVFPRHFRVSSSSILP). Lysine 222 is a substrate binding site. Mg(2+) is bound by residues aspartate 354 and aspartate 356. The DXDD motif motif lies at 354 to 357 (DVDD). Lysine 440 contacts substrate.

This sequence belongs to the terpene synthase family. Tpsc subfamily. Requires Mg(2+) as cofactor. Accumulates in leaves, and, at low levels, in germinating seeds.

The protein resides in the plastid. It localises to the chloroplast. It catalyses the reaction (2E,6E,10E)-geranylgeranyl diphosphate = ent-copalyl diphosphate. The protein operates within plant hormone biosynthesis; gibberellin biosynthesis. It functions in the pathway secondary metabolite biosynthesis; terpenoid biosynthesis. Involved in the biosynthesis of ent-kaurene diterpenoids natural products such as oridonin, miltiradiene, eriocalyxin B and nezukol, known to exhibit antitumor, anti-inflammatory and antibacterial activities, and in the production of gibberellins phytohormones. Catalyzes the conversion of (2E,6E,10E)-geranylgeranyl diphosphate (GGPP) to ent-copalyl diphosphate (ent-CPP). The protein is Ent-copalyl diphosphate synthase 3 of Isodon eriocalyx (Plectranthus eriocalyx).